We begin with the raw amino-acid sequence, 313 residues long: Protein FixB (313 aa).

Leu-255–Asp-283 serves as a coordination point for FAD.

This sequence belongs to the ETF alpha-subunit/FixB family. As to quaternary structure, heterodimer of FixA and FixB.

Its pathway is amine and polyamine metabolism; carnitine metabolism. Its function is as follows. Required for anaerobic carnitine reduction. May bring reductant to CaiA. This is Protein FixB from Escherichia coli O17:K52:H18 (strain UMN026 / ExPEC).